The following is a 543-amino-acid chain: Protein pbn1 (543 aa).

The Lumenal segment spans residues 1–503; sequence MRRRITFVQR…KGFFQSKAIE (503 aa). N-linked (GlcNAc...) asparagine glycosylation is present at N409. The chain crosses the membrane as a helical span at residues 504–524; the sequence is LGTMIVIGLGSLWVLWKLGAI. Residues 525–543 lie on the Cytoplasmic side of the membrane; the sequence is AWSSGTRPQRKSTKQKKSE.

It belongs to the PIGX family.

The protein localises to the endoplasmic reticulum membrane. It participates in glycolipid biosynthesis; glycosylphosphatidylinositol-anchor biosynthesis. Required for proper folding and/or the stability of a subset of proteins in the endoplasmic reticulum. Component of glycosylphosphatidylinositol-mannosyltransferase 1 which transfers the first of the 4 mannoses in the GPI-anchor precursors during GPI-anchor biosynthesis. Probably acts by stabilizing the mannosyltransferase gpi14. This chain is Protein pbn1 (pbn1), found in Aspergillus oryzae (strain ATCC 42149 / RIB 40) (Yellow koji mold).